A 613-amino-acid chain; its full sequence is V-type proton ATPase catalytic subunit A isoform 1 (613 aa).

Residue 240–247 (GAFGCGKT) coordinates ATP.

It belongs to the ATPase alpha/beta chains family. V-ATPase is a heteromultimeric enzyme composed of a peripheral catalytic V1 complex (main components: subunits A, B, C, D, E, and F) attached to an integral membrane V0 proton pore complex (main component: the proteolipid protein).

It carries out the reaction ATP + H2O + 4 H(+)(in) = ADP + phosphate + 5 H(+)(out). Functionally, catalytic subunit of the peripheral V1 complex of vacuolar ATPase. V-ATPase vacuolar ATPase is responsible for acidifying a variety of intracellular compartments in eukaryotic cells. The chain is V-type proton ATPase catalytic subunit A isoform 1 from Acetabularia acetabulum (Mermaid's wine glass).